Reading from the N-terminus, the 557-residue chain is Nucleoprotein (557 aa).

Residues 54–235 form a binding site for the cap structure m7GTP region; it reads MRKDKRSDDD…ITKEESANNI (182 aa). Residues D379 and E381 each contribute to the Mn(2+) site. E389, C496, H499, and C518 together coordinate Zn(2+). D522 provides a ligand contact to Mn(2+).

It belongs to the arenaviridae nucleocapsid protein family. Homomultimerizes to form the nucleocapsid. Binds to viral genomic RNA. Interacts with glycoprotein G2. Interacts with protein Z; this interaction probably directs the encapsidated genome to budding sites. Interacts with protein L; this interaction does not interfere with Z-L interaction. Interacts with host IKBKE (via Protein kinase domain); the interaction inhibits IKBKE kinase activity.

The protein resides in the virion. It is found in the host cytoplasm. Its function is as follows. Encapsidates the genome, protecting it from nucleases. The encapsidated genomic RNA is termed the nucleocapsid (NC). Serves as template for viral transcription and replication. The increased presence of protein N in host cell does not seem to trigger the switch from transcription to replication as observed in other negative strain RNA viruses. Through the interaction with host IKBKE, strongly inhibits the phosphorylation and nuclear translocation of host IRF3, a protein involved in interferon activation pathway, leading to the inhibition of interferon-beta and IRF3-dependent promoters activation. Also encodes a functional 3'-5' exoribonuclease that degrades preferentially dsRNA substrates and thereby participates in the suppression of interferon induction. In Calomys callosus (Large vesper mouse), this protein is Nucleoprotein.